A 517-amino-acid polypeptide reads, in one-letter code: Cytochrome P450 monooxygenase penP (517 aa).

A helical transmembrane segment spans residues 17-37 (GEATVIWILVALVLVAYLILP). Cys-456 lines the heme pocket. Residue Asn-501 is glycosylated (N-linked (GlcNAc...) asparagine).

Belongs to the cytochrome P450 family. Heme serves as cofactor.

Its subcellular location is the membrane. It functions in the pathway secondary metabolite biosynthesis. Cytochrome P450 monooxygenase; part of the gene cluster that mediates the biosynthesis of the indole diterpenes penitrems. The geranylgeranyl diphosphate (GGPP) synthase penG catalyzes the first step in penitrem biosynthesis via conversion of farnesyl pyrophosphate and isopentyl pyrophosphate into geranylgeranyl pyrophosphate (GGPP). Condensation of indole-3-glycerol phosphate with GGPP by the prenyl transferase penC then forms 3-geranylgeranylindole (3-GGI). Epoxidation by the FAD-dependent monooxygenase penM leads to a epoxidized-GGI that is substrate of the terpene cyclase penB for cyclization to yield paspaline. Paspaline is subsequently converted to 13-desoxypaxilline by the cytochrome P450 monooxygenase penP, the latter being then converted to paxilline by the cytochrome P450 monooxygenase penQ. Paxilline is converted to beta-paxitriol via C-10 ketoreduction by the short-chain dehydrogenase PC-15 which can be monoprenylated at the C-20 by the indole diterpene prenyltransferase penD. A two-step elimination (acetylation and elimination) process performed by the O-acetyltransferase PC-16 and the P.simplicissimum ptmI-ortholog not yet identified in P.crustosum, leads to the production of the prenylated form of penijanthine. The FAD-linked oxidoreductase ptmO then converts the prenylated form of penijanthine into PC-M5 which is in turn transformed into PC-M4 by the aromatic dimethylallyltransferase PC-22. A series of oxidation steps involving 4 cytochrome P450 monooxygenases (PC-21, PC-05, PC-23, PC-20) and a FAD-dependent monooxygenase (PC-14) are required for the transformation of PC-M4 to penitrems A and E. Synthesis of these final products is proposed to proceed via penitrems D and C (PC-21, PC-05, PC-14) and penitrems B and F (PC-21, PC-05, PC-14, PC-23). The protein is Cytochrome P450 monooxygenase penP of Penicillium crustosum (Blue mold fungus).